We begin with the raw amino-acid sequence, 332 residues long: Protein FAM131B (332 aa).

The disordered stretch occupies residues 1-22 (MDSTSSLHGSSLHRPSTEQTRT). Ser-47, Ser-114, and Ser-117 each carry phosphoserine. Residues 221–332 (LGPAFDDSQP…FDEEEGDANN (112 aa)) are disordered. Composition is skewed to basic and acidic residues over residues 272–281 (PVEEEKRPLA) and 288–302 (AGCRDLESLSPREDP). 3 positions are modified to phosphoserine: Ser-295, Ser-297, and Ser-313. Thr-316 is modified (phosphothreonine). Ser-317, Ser-318, and Ser-322 each carry phosphoserine. The segment covering 323–332 (FDEEEGDANN) has biased composition (acidic residues).

It belongs to the FAM131 family.

The sequence is that of Protein FAM131B (Fam131b) from Rattus norvegicus (Rat).